A 32-amino-acid polypeptide reads, in one-letter code: Phospholipase A2 (32 aa).

Ca(2+)-binding residues include Tyr16, Gly18, and Gly20.

Ca(2+) serves as cofactor. Expressed by the venom gland.

It localises to the secreted. It catalyses the reaction a 1,2-diacyl-sn-glycero-3-phosphocholine + H2O = a 1-acyl-sn-glycero-3-phosphocholine + a fatty acid + H(+). In terms of biological role, PLA2 catalyzes the calcium-dependent hydrolysis of the 2-acyl groups in 3-sn-phosphoglycerides. This Micrurus lemniscatus (South American coral snake) protein is Phospholipase A2.